We begin with the raw amino-acid sequence, 400 residues long: Large envelope protein (400 aa).

Met-1 is subject to N-acetylmethionine. Gly-2 carries the N-myristoyl glycine; by host lipid modification. The tract at residues 2–119 (GAPLSTARRG…PPLRDTHPQA (118 aa)) is pre-S1. The tract at residues 2–174 (GAPLSTARRG…FSKTGDPAMN (173 aa)) is pre-S. Residues 2–181 (GAPLSTARRG…AMNMENITSG (180 aa)) lie on the Virion surface; in external conformation side of the membrane. Residues 2 to 253 (GAPLSTARRG…PGYRWMCLRR (252 aa)) lie on the Intravirion; in internal conformation side of the membrane. An N-linked (GlcNAc...) asparagine glycan is attached at Pro-4. A disordered region spans residues 70–115 (PHGGLLGWSPQAQGILTTSPPDPPPASTNRRSGRKPTPVSPPLRDT). Residues 79–88 (PQAQGILTTS) are compositionally biased toward polar residues. Positions 120-174 (MQWNSTQFHQALLDPRVRGLYLPAGGSSSETQNPVPTIASLTSSIFSKTGDPAMN) are pre-S2. Residues 182–202 (LLGPLLVLQAVCFLLTKILTI) form a helical membrane-spanning segment. Topologically, residues 203 to 253 (PQSLDSWWTSLNFLGVPPGCPGQNSQSPISNHLPTSCPPTCPGYRWMCLRR) are intravirion; in external conformation. Residues 254–274 (FIIFLFILLLCLIFLLVLLDY) form a helical membrane-spanning segment. Topologically, residues 275-348 (QGMLPVCPLL…WASARFSWLS (74 aa)) are virion surface. N-linked (GlcNAc...) asparagine; by host glycosylation occurs at Asn-320. A helical membrane pass occupies residues 349–369 (LLVQFVQWCVGLSPTVWLLVI). Residues 370 to 375 (WMIWYW) lie on the Intravirion side of the membrane. The helical transmembrane segment at 376–398 (GPNLCSILSPFIPLLPIFCYLWA) threads the bilayer. The Virion surface segment spans residues 399–400 (SI).

The protein belongs to the orthohepadnavirus major surface antigen family. As to quaternary structure, in its internal form (Li-HBsAg), interacts with the capsid protein and with the isoform S. Interacts with host chaperone CANX. In terms of assembly, associates with host chaperone CANX through its pre-S2 N glycan; this association may be essential for isoform M proper secretion. Interacts with isoform L. Interacts with the antigens of satellite virus HDV (HDVAgs); this interaction is required for encapsidation of HDV genomic RNA. Post-translationally, isoform M is N-terminally acetylated by host at a ratio of 90%, and N-glycosylated by host at the pre-S2 region. Myristoylated.

The protein resides in the virion membrane. The large envelope protein exists in two topological conformations, one which is termed 'external' or Le-HBsAg and the other 'internal' or Li-HBsAg. In its external conformation the protein attaches the virus to cell receptors and thereby initiating infection. This interaction determines the species specificity and liver tropism. This attachment induces virion internalization predominantly through caveolin-mediated endocytosis. The large envelope protein also assures fusion between virion membrane and endosomal membrane. In its internal conformation the protein plays a role in virion morphogenesis and mediates the contact with the nucleocapsid like a matrix protein. Its function is as follows. The middle envelope protein plays an important role in the budding of the virion. It is involved in the induction of budding in a nucleocapsid independent way. In this process the majority of envelope proteins bud to form subviral lipoprotein particles of 22 nm of diameter that do not contain a nucleocapsid. This Hepatitis B virus genotype H subtype adw4 (isolate Nicaragua/2928Nic/1997) (HBV-H) protein is Large envelope protein.